The primary structure comprises 216 residues: Cytochrome c biogenesis ATP-binding export protein CcmA (216 aa).

Residues 2–215 form the ABC transporter domain; sequence LSVEELSCVR…SNHLRKIKLG (214 aa). 34–41 contributes to the ATP binding site; the sequence is GHNGAGKT.

The protein belongs to the ABC transporter superfamily. CcmA exporter (TC 3.A.1.107) family. In terms of assembly, the complex is composed of two ATP-binding proteins (CcmA) and two transmembrane proteins (CcmB).

It is found in the cell inner membrane. It catalyses the reaction heme b(in) + ATP + H2O = heme b(out) + ADP + phosphate + H(+). In terms of biological role, part of the ABC transporter complex CcmAB involved in the biogenesis of c-type cytochromes; once thought to export heme, this seems not to be the case, but its exact role is uncertain. Responsible for energy coupling to the transport system. The polypeptide is Cytochrome c biogenesis ATP-binding export protein CcmA (Photobacterium profundum (strain SS9)).